The following is a 1006-amino-acid chain: GATA zinc finger domain-containing protein 7 (1006 aa).

Low complexity predominate over residues 55–70 (SSSNNFINNHHNNQSS). Disordered regions lie at residues 55–116 (SSSN…APNL), 128–248 (PFQN…DPFY), 381–499 (NAKK…PLST), 528–638 (STSG…SSNS), and 657–800 (YNSN…NYHD). Residues 71-86 (DIHSISQSTPNLSTLI) show a composition bias toward polar residues. Composition is skewed to low complexity over residues 87–110 (SSSS…NSSS) and 128–158 (PFQN…CNNS). The segment covering 159–168 (PVSSSTNYIP) has biased composition (polar residues). A compositionally biased stretch (low complexity) spans 169–180 (NNSTSNVVLNSS). A compositionally biased stretch (polar residues) spans 181-190 (IPTTSPNVLS). Composition is skewed to low complexity over residues 205–241 (NNNN…NNNN) and 388–410 (TNTN…NNNN). Polar residues predominate over residues 411–426 (IQQANVNTSPISTSTT). 2 stretches are compositionally biased toward low complexity: residues 427-456 (PNNN…QQAQ) and 468-496 (SITP…GASP). Positions 528 to 539 (STSGMLSTTNPY) are enriched in polar residues. The span at 540 to 557 (THHSPNTSSTVSSSVTSP) shows a compositional bias: low complexity. The segment covering 558-589 (LINQYGTNPTLTNNHSFYGSLASNQNTGASDG) has biased composition (polar residues). Low complexity-rich tracts occupy residues 590–601 (NNNNNNNNNNNN) and 619–638 (SSNP…SSNS). Residues 662-680 (GSGMTTPQSLGHSPSHNDY) are compositionally biased toward polar residues. Composition is skewed to low complexity over residues 681–706 (NSNN…NSNN) and 713–785 (SNSS…SSNN). The GATA-type zinc finger occupies 842–867 (CHNCGTKNTPEWRRGPSGPATLCNAC). The disordered stretch occupies residues 925-957 (NNASSSSSSSSSSSSSSSSSSSTSSYSSSSYNI). A compositionally biased stretch (low complexity) spans 928–954 (SSSSSSSSSSSSSSSSSSSTSSYSSSS).

The chain is GATA zinc finger domain-containing protein 7 (gtaG) from Dictyostelium discoideum (Social amoeba).